Here is a 197-residue protein sequence, read N- to C-terminus: MVGPEIERLIQLLSRLPGLGPRSARRAALRLVEKRESLLVPLAQAMADAAARVRTCSVCGNFDTIDPCAICADHRRDPSMLCVVEDVAGLWAMERTGSFKGRYAVLGGLLSALDGVGPEDLGIESLVARALDPAITEIILATPATVEGQTTAHYVAERLAPCNVTVSGLAHGVPVGGELDHLDDGTITAALRARRVF.

A C4-type zinc finger spans residues 56–71; that stretch reads CSVCGNFDTIDPCAIC. The Toprim domain maps to 79 to 174; sequence SMLCVVEDVA…TVSGLAHGVP (96 aa).

This sequence belongs to the RecR family.

Its function is as follows. May play a role in DNA repair. It seems to be involved in an RecBC-independent recombinational process of DNA repair. It may act with RecF and RecO. The polypeptide is Recombination protein RecR (Paramagnetospirillum magneticum (strain ATCC 700264 / AMB-1) (Magnetospirillum magneticum)).